We begin with the raw amino-acid sequence, 762 residues long: 5-methyltetrahydropteroyltriglutamate--homocysteine methyltransferase (762 aa).

5-methyltetrahydropteroyltri-L-glutamate-binding positions include arginine 16 to lysine 19 and lysine 117. L-homocysteine contacts are provided by residues isoleucine 438 to serine 440 and glutamate 491. L-methionine-binding positions include isoleucine 438–serine 440 and glutamate 491. 5-methyltetrahydropteroyltri-L-glutamate-binding positions include arginine 522–cysteine 523 and tryptophan 568. Aspartate 606 provides a ligand contact to L-homocysteine. Residue aspartate 606 coordinates L-methionine. Residue glutamate 612 coordinates 5-methyltetrahydropteroyltri-L-glutamate. 3 residues coordinate Zn(2+): histidine 648, cysteine 650, and glutamate 672. Catalysis depends on histidine 701, which acts as the Proton donor. Cysteine 733 provides a ligand contact to Zn(2+).

It belongs to the vitamin-B12 independent methionine synthase family. The cofactor is Zn(2+).

The enzyme catalyses 5-methyltetrahydropteroyltri-L-glutamate + L-homocysteine = tetrahydropteroyltri-L-glutamate + L-methionine. Its pathway is amino-acid biosynthesis; L-methionine biosynthesis via de novo pathway; L-methionine from L-homocysteine (MetE route): step 1/1. Its function is as follows. Catalyzes the transfer of a methyl group from 5-methyltetrahydrofolate to homocysteine resulting in methionine formation. The chain is 5-methyltetrahydropteroyltriglutamate--homocysteine methyltransferase from Pseudomonas fluorescens (strain ATCC BAA-477 / NRRL B-23932 / Pf-5).